Here is a 1208-residue protein sequence, read N- to C-terminus: Neural cell adhesion molecule L1-like protein (1208 aa).

Positions M1 to A24 are cleaved as a signal peptide. The Extracellular portion of the chain corresponds to I25–W1082. 2 Ig-like C2-type domains span residues P35–E124 and P128–T223. Disulfide bonds link C57–C109 and C153–C204. K231 and N299 each carry an N-linked (GlcNAc...) asparagine glycan. Ig-like C2-type domains lie at P235 to E328, P331 to D417, P423 to D510, and T515 to T607. 4 disulfides stabilise this stretch: C262/C310, C352/C401, C445/C494, and C536/C591. N476 and N482 each carry an N-linked (GlcNAc...) asparagine glycan. Positions D555–A558 match the DGEA motif. 2 N-linked (GlcNAc...) asparagine glycosylation sites follow: N562 and N580. Fibronectin type-III domains follow at residues P614 to A709, N714 to D807, P809 to G914, and Q918 to G1015. Residues G693 to Q716 form a disordered region. Residues N767, N822, N945, and N1026 are each glycosylated (N-linked (GlcNAc...) asparagine). The chain crosses the membrane as a helical span at residues F1083 to V1103. Residues K1104–A1208 lie on the Cytoplasmic side of the membrane. The disordered stretch occupies residues E1131 to S1163. S1147, S1160, and S1180 each carry phosphoserine. The segment covering R1149–A1161 has biased composition (polar residues). Residues F1181–Y1185 carry the FIG[AQ]Y motif. The tract at residues K1189 to A1208 is disordered. Polar residues predominate over residues V1194–A1208.

The protein belongs to the immunoglobulin superfamily. L1/neurofascin/NgCAM family. May interact with L1CAM. May interact with ITGB1/ITGA1 heterodimer and ITGB1/ITGA2 heterodimer as well as with ANK3. Post-translationally, cleavage by metalloprotease ADAM8 in the extracellular part generates 2 soluble forms (125 kDa and 165 kDa) in vitro and is inhibited by metalloprotease inhibitors. Cleaved by BACE1. N-glycosylated. Contains N-linked oligosaccharides with a sulfated carbohydrate structure type HNK-1 (SO4-3-GlcUABeta1,3GalBeta1,4GlcNAc). In terms of processing, O-glycosylated. As to expression, expressed in the fetal and adult brain as well as in Schwann cell culture. Also detected in adult peripheral tissues.

It is found in the cell membrane. The protein resides in the secreted. Its subcellular location is the extracellular space. It localises to the extracellular matrix. Functionally, extracellular matrix and cell adhesion protein that plays a role in nervous system development and in synaptic plasticity. Both soluble and membranous forms promote neurite outgrowth of cerebellar and hippocampal neurons and suppress neuronal cell death. Plays a role in neuronal positioning of pyramidal neurons and in regulation of both the number of interneurons and the efficacy of GABAergic synapses. May play a role in regulating cell migration in nerve regeneration and cortical development. Potentiates integrin-dependent cell migration towards extracellular matrix proteins. Recruits ANK3 to the plasma membrane. The protein is Neural cell adhesion molecule L1-like protein (CHL1) of Homo sapiens (Human).